Consider the following 1003-residue polypeptide: Calcium-transporting ATPase sarcoplasmic/endoplasmic reticulum type (1003 aa).

The Cytoplasmic portion of the chain corresponds to M1–D59. A helical membrane pass occupies residues L60–F78. Residues E79–T89 are Extracellular-facing. The chain crosses the membrane as a helical span at residues A90 to W110. Residues Q111 to Q262 are Cytoplasmic-facing. A helical transmembrane segment spans residues L263 to F282. Residues N283–K300 lie on the Extracellular side of the membrane. A helical transmembrane segment spans residues I301–I318. Topologically, residues T319–E775 are cytoplasmic. D354 functions as the 4-aspartylphosphate intermediate in the catalytic mechanism. An ATP-binding site is contributed by K519. A helical membrane pass occupies residues V776–V799. The Extracellular portion of the chain corresponds to N800–R840. The helical transmembrane segment at Y841–S863 threads the bilayer. Residues P864–P898 are Cytoplasmic-facing. Residues H899–I917 form a helical membrane-spanning segment. The Extracellular segment spans residues N918–N934. Residues I935–V954 traverse the membrane as a helical segment. Residues E955–K1003 lie on the Cytoplasmic side of the membrane.

Belongs to the cation transport ATPase (P-type) (TC 3.A.3) family.

It is found in the sarcoplasmic reticulum membrane. The enzyme catalyses Ca(2+)(in) + ATP + H2O = Ca(2+)(out) + ADP + phosphate + H(+). Its function is as follows. This magnesium-dependent enzyme catalyzes the hydrolysis of ATP coupled with the transport of the calcium. In Artemia franciscana (Brine shrimp), this protein is Calcium-transporting ATPase sarcoplasmic/endoplasmic reticulum type.